Here is a 417-residue protein sequence, read N- to C-terminus: MGPRQGRWWLLLWLPPLATLPVRGEAAAAALSVRRCKALKEKDLIRTSESDCYCYNQNSQVEWKYIWSTMQVKITSPGLFRIVYIAERHNCQYPENILSFIKCVIHNFWIPKESNEITIIINPYRETVCFSVEPVKKIFNYMIHVNRNIMDFKLFLVFVAGVFLFFYARTLSQSPTFYYSSGTVLGVLMTLVFVLLLVKRFIPKYSTFWALMVGCWFASVYIVCQLMEDLKWLWYENRIYVLGYVLIVGFFSFVVCYKHGPLADDRSRSLLMWMLRLLSLVLVYAGVAVPQFAYAAIILLMSSWSLHYPLRACSYMRWKMEQWFTSKELVVKYLTEDEYREQADAETNSALEELRRACRKPDFPSWLVVSRLHTPSKFADFVLGGSHLSPEEISLHEEQYGLGGAFLEEQLFNPSTA.

An N-terminal signal peptide occupies residues 1–24 (MGPRQGRWWLLLWLPPLATLPVRG). A run of 5 helical transmembrane segments spans residues 148–168 (NIMDFKLFLVFVAGVFLFFYA), 177–197 (FYYSSGTVLGVLMTLVFVLLL), 207–227 (TFWALMVGCWFASVYIVCQLM), 239–259 (IYVLGYVLIVGFFSFVVCYKH), and 280–300 (LVLVYAGVAVPQFAYAAIILL).

The protein belongs to the NEMP family.

Its subcellular location is the nucleus inner membrane. The polypeptide is Nuclear envelope integral membrane protein 2 (NEMP2) (Homo sapiens (Human)).